Reading from the N-terminus, the 102-residue chain is Protein RnfH (102 aa).

It belongs to the UPF0125 (RnfH) family.

The polypeptide is Protein RnfH (Haemophilus influenzae (strain 86-028NP)).